The primary structure comprises 206 residues: Charged multivesicular body protein 2a homolog 1 (206 aa).

The interval 1 to 32 is disordered; that stretch reads MSFFGGNKKTPEQELKDSKRELSKGQREMDRE. Residues 9–32 are compositionally biased toward basic and acidic residues; sequence KTPEQELKDSKRELSKGQREMDRE. Coiled-coil stretches lie at residues 12-80 and 114-148; these read EQEL…RATK and NKQT…DMFE.

This sequence belongs to the SNF7 family. As to quaternary structure, probable core component of the endosomal sorting required for transport complex III (ESCRT-III). ESCRT-III components are thought to multimerize to form a flat lattice on the perimeter membrane of the endosome.

It localises to the endosome membrane. In terms of biological role, probable core component of the endosomal sorting required for transport complex III (ESCRT-III) which is involved in multivesicular bodies (MVBs) formation and sorting of endosomal cargo proteins into MVBs. MVBs contain intraluminal vesicles (ILVs) that are generated by invagination and scission from the limiting membrane of the endosome and are delivered to lysosomes enabling degradation of membrane proteins. In Dictyostelium discoideum (Social amoeba), this protein is Charged multivesicular body protein 2a homolog 1 (chmp2a1).